The primary structure comprises 651 residues: Choline transporter-like protein 1 (651 aa).

At 1-25 (MGCCGSTQNSKRDWRPLEEHSCTDI) the chain is on the cytoplasmic side. The helical transmembrane segment at 26 to 46 (PWLLLFILFCVGMGFICGFSI) threads the bilayer. Topologically, residues 47–208 (ATGAASRLVF…RLISGVMTSK (162 aa)) are extracellular. Residues N131 and N176 are each glycosylated (N-linked (GlcNAc...) asparagine). The chain crosses the membrane as a helical span at residues 209-229 (EIIMGLCLLSLVLSMILMVII). At 230 to 234 (RYISR) the chain is on the cytoplasmic side. A helical membrane pass occupies residues 235-255 (VLVWIITILVVLGSLGGTGVL). The Extracellular segment spans residues 256 to 284 (WWLYADNKKSLNENLPPDQLQVSKDNLQA). Residues 285 to 305 (LLVYAIAATVFTVILLLMMLI) form a helical membrane-spanning segment. Residues 306-311 (MRKRVA) lie on the Cytoplasmic side of the membrane. Residues 312–332 (LTIALFNVAGKVFIHLPLLVF) traverse the membrane as a helical segment. Residues 333 to 334 (QP) are Extracellular-facing. The chain crosses the membrane as a helical span at residues 335-355 (FWTFFALLLFWVYWVMVLLFL). The Cytoplasmic portion of the chain corresponds to 356–376 (GTAGDPFTNEQGFVEFRINGP). The chain crosses the membrane as a helical span at residues 377 to 397 (LQYMWWYHLVGLIWISEFILA). Topologically, residues 398–438 (CQQMTIAGAVVTYYFTRNKNDLPFTPILASVNRLIRYHLGT) are extracellular. The chain crosses the membrane as a helical span at residues 439–459 (VAKGAFIITLVKIPRMILMYI). The Cytoplasmic segment spans residues 460–533 (HSQLKGKENA…RVAAINTVGD (74 aa)). A helical membrane pass occupies residues 534 to 554 (FMLFLGKILIVSCTGLAGIML). The Extracellular segment spans residues 555-562 (LNYQRDYT). The chain crosses the membrane as a helical span at residues 563–583 (VWVLPLIIVCLFAFLVAHCFL). Residues 584 to 651 (SIYEMVVDVL…KPMASGTSTA (68 aa)) lie on the Cytoplasmic side of the membrane. The tract at residues 629 to 651 (LKEPGSTAEGRELKPMASGTSTA) is disordered.

Belongs to the CTL (choline transporter-like) family.

Its subcellular location is the cell membrane. It localises to the mitochondrion outer membrane. It catalyses the reaction choline(out) + n H(+)(in) = choline(in) + n H(+)(out). The enzyme catalyses ethanolamine(out) + n H(+)(in) = ethanolamine(in) + n H(+)(out). Choline/H+ antiporter. Also acts as a high-affinity ethanolamine/H+ antiporter, regulating the supply of extracellular ethanolamine (Etn) for the CDP-Etn pathway, redistribute intracellular Etn and balance the CDP-Cho and CDP-Etn arms of the Kennedy pathway. Involved in membrane synthesis and myelin production. The polypeptide is Choline transporter-like protein 1 (slc44a1) (Xenopus laevis (African clawed frog)).